Here is a 292-residue protein sequence, read N- to C-terminus: Bifunctional protein FolD 1 (292 aa).

NADP(+) is bound at residue 165 to 167 (GRS).

Belongs to the tetrahydrofolate dehydrogenase/cyclohydrolase family. Homodimer.

The catalysed reaction is (6R)-5,10-methylene-5,6,7,8-tetrahydrofolate + NADP(+) = (6R)-5,10-methenyltetrahydrofolate + NADPH. It carries out the reaction (6R)-5,10-methenyltetrahydrofolate + H2O = (6R)-10-formyltetrahydrofolate + H(+). Its pathway is one-carbon metabolism; tetrahydrofolate interconversion. Catalyzes the oxidation of 5,10-methylenetetrahydrofolate to 5,10-methenyltetrahydrofolate and then the hydrolysis of 5,10-methenyltetrahydrofolate to 10-formyltetrahydrofolate. This is Bifunctional protein FolD 1 from Myxococcus xanthus (strain DK1622).